A 139-amino-acid polypeptide reads, in one-letter code: D-ribose pyranase (139 aa).

The active-site Proton donor is H20. Residues D28, H106, and 128-130 (YAN) contribute to the substrate site.

The protein belongs to the RbsD / FucU family. RbsD subfamily. Homodecamer.

The protein resides in the cytoplasm. It catalyses the reaction beta-D-ribopyranose = beta-D-ribofuranose. Its pathway is carbohydrate metabolism; D-ribose degradation; D-ribose 5-phosphate from beta-D-ribopyranose: step 1/2. Its function is as follows. Catalyzes the interconversion of beta-pyran and beta-furan forms of D-ribose. In Histophilus somni (strain 129Pt) (Haemophilus somnus), this protein is D-ribose pyranase.